We begin with the raw amino-acid sequence, 344 residues long: Dihydroorotate dehydrogenase (quinone) (344 aa).

Residues Ala-61 to Lys-65 and Thr-85 each bind FMN. Residue Lys-65 participates in substrate binding. Asn-110–Phe-114 contacts substrate. Asn-138 and Asn-171 together coordinate FMN. Asn-171 contributes to the substrate binding site. Ser-174 serves as the catalytic Nucleophile. Asn-176 contacts substrate. FMN-binding residues include Lys-216 and Thr-244. Substrate is bound at residue Asn-245–Thr-246. FMN-binding positions include Gly-267, Gly-296, and Tyr-317–Ser-318.

This sequence belongs to the dihydroorotate dehydrogenase family. Type 2 subfamily. As to quaternary structure, monomer. It depends on FMN as a cofactor.

The protein resides in the cell membrane. It carries out the reaction (S)-dihydroorotate + a quinone = orotate + a quinol. The protein operates within pyrimidine metabolism; UMP biosynthesis via de novo pathway; orotate from (S)-dihydroorotate (quinone route): step 1/1. Catalyzes the conversion of dihydroorotate to orotate with quinone as electron acceptor. The polypeptide is Dihydroorotate dehydrogenase (quinone) (Psychrobacter sp. (strain PRwf-1)).